Here is a 273-residue protein sequence, read N- to C-terminus: Beta-lactamase OXA-133 (273 aa).

An N-terminal signal peptide occupies residues 1–17 (MNKYFTCYVVASLFFSG). Cys18 carries N-palmitoyl cysteine lipidation. A lipid anchor (S-diacylglycerol cysteine) is attached at Cys18. Catalysis depends on Ser79, which acts as the Acyl-ester intermediate. Lys82 carries the post-translational modification N6-carboxylysine. 216 to 218 (KTG) lines the substrate pocket.

This sequence belongs to the class-D beta-lactamase family.

The protein resides in the cell membrane. The catalysed reaction is a beta-lactam + H2O = a substituted beta-amino acid. In terms of biological role, catalyzes the hydrolysis of beta-lactam antibiotics. In Acinetobacter radioresistens, this protein is Beta-lactamase OXA-133.